Consider the following 639-residue polypeptide: Sodium-dependent phosphate transport protein 2A (639 aa).

The Cytoplasmic segment spans residues 1 to 103 (MISYGENLGG…LRRAGVTLLK (103 aa)). Phosphoserine occurs at positions 14 and 34. A helical membrane pass occupies residues 104–125 (VPLMLSFLYLFVCSLDVLSSAF). At 126 to 145 (QLAGGKVAGDIFKDNAILSN) the chain is on the extracellular side. The chain crosses the membrane as a helical span at residues 146-163 (PVAGLVVGILVTVLVQSS). Residues 164–165 (ST) lie on the Cytoplasmic side of the membrane. Residues 166–185 (STSIVVSMVSSGLLEVSSAI) traverse the membrane as a helical segment. Residues 186-347 (PIIMGSNIGT…HIFVDTGLPD (162 aa)) lie on the Extracellular side of the membrane. Cystine bridges form between Cys225–Cys522 and Cys306–Cys336. 3 N-linked (GlcNAc...) asparagine glycosylation sites follow: Asn298, Asn323, and Asn330. The helical transmembrane segment at 348 to 370 (LAVGLILLAGSLALLCTCLILLV) threads the bilayer. Residues 371-412 (KMLNSLLKGQVAKVIQKVINTDFPTPFTWATGYFAMVVGASM) are Cytoplasmic-facing. The chain crosses the membrane as a helical span at residues 413 to 436 (TFVVQSSSVFTSAITPLIGLGVIS). Residues 437–466 (IERAYPLTLGSNIGTTTTAILAALASPREK) lie on the Extracellular side of the membrane. The chain crosses the membrane as a helical span at residues 467–487 (LSSAFQIALCHFFFNISGILL). At 488-513 (WYPVPCTRLPIRMAKALGKRTAKYRW) the chain is on the cytoplasmic side. Thr508 carries the post-translational modification Phosphothreonine; by PKC. The chain crosses the membrane as a helical span at residues 514 to 534 (FAVLYLLLCFLLLPSMVFGLS). Topologically, residues 535–539 (MAGWR) are extracellular. Residues 540 to 561 (AMVGVGAPFGALLAFVVLVSAL) traverse the membrane as a helical segment. Residues 562 to 639 (QHRSPGCLPK…MPHHHDATRL (78 aa)) are Cytoplasmic-facing. Ser607 is subject to Phosphoserine. A Phosphothreonine modification is found at Thr623. Ser625 carries the post-translational modification Phosphoserine.

Belongs to the SLC34A transporter family. As to quaternary structure, interacts via its C-terminal region with NHERF4. Interacts with NHERF1. Interacts with TMEM174; regulates SLC34A1 internalization by PTH and FGF23.

Its subcellular location is the apical cell membrane. The protein localises to the cell membrane. It catalyses the reaction 3 Na(+)(out) + phosphate(out) = 3 Na(+)(in) + phosphate(in). Involved in actively transporting phosphate into cells via Na(+) cotransport in the renal brush border membrane. The cotransport has a Na(+):Pi stoichiometry of 3:1 and is electrogenic. The protein is Sodium-dependent phosphate transport protein 2A of Ovis aries (Sheep).